Reading from the N-terminus, the 99-residue chain is U1-theraphotoxin-Lsp1a (99 aa).

The first 23 residues, 1–23 (MRSLTLAALLLCSLLLVFHTSAA), serve as a signal peptide directing secretion. Residues 24 to 50 (AELEAQEGHLMIPGDTDTALETVDDER) constitute a propeptide that is removed on maturation. Cystine bridges form between Cys54/Cys67, Cys58/Cys91, Cys72/Cys74, and Cys85/Cys96.

The protein belongs to the neurotoxin 12 (Hwtx-2) family. 04 (lasiotoxin) subfamily. Expressed by the venom gland.

It localises to the secreted. Toxin that causes irreversible contractile paralysis into adult Aedes aegypti resulting in 100% mortality after 24 hours. The chain is U1-theraphotoxin-Lsp1a from Lasiodora sp. (strain IBSP 8539) (Brazilian salmon pink birdeater).